The primary structure comprises 409 residues: uncharacterized protein (409 aa).

The 160-residue stretch at 3–162 (TDVRVLRQDD…DDVRLRYAVP (160 aa)) folds into the N-acetyltransferase domain. Acetyl-CoA contacts are provided by residues 82–84 (VSV), 90–95 (RRGVLT), and 118–119 (SE). Residue Tyr123 is the Proton donor of the active site. Phe409 acts as the Proton acceptor; via carboxylate in catalysis.

This sequence belongs to the acetyltransferase Eis family. In terms of assembly, homohexamer; trimer of dimers.

This is an uncharacterized protein from Streptomyces avermitilis (strain ATCC 31267 / DSM 46492 / JCM 5070 / NBRC 14893 / NCIMB 12804 / NRRL 8165 / MA-4680).